We begin with the raw amino-acid sequence, 359 residues long: Pheromone receptor 1 (359 aa).

The next 7 membrane-spanning stretches (helical) occupy residues 5-25, 33-53, 71-87, 110-130, 147-167, 206-226, and 268-288; these read VTPFFALFACILVLFALGWHI, ITLSLYLFFGNLDNFVNSVAW, LRHALYIAIPASNLVIA, IIIDLLISVGLPVLYVSLMIV, FLSLSWVWVLLVAAPVLIVSF, LLVLTAIDMLLFFPIYVGSVS, and LILSRLVCPISAYIFFAMFGL. The segment at 335 to 359 is disordered; sequence TSGGIDGSPHSEKFSINTPTKYEEA. Positions 348–359 are enriched in polar residues; it reads FSINTPTKYEEA.

The protein belongs to the G-protein coupled receptor 4 family.

It localises to the membrane. In terms of biological role, receptor for the A2 pheromone, a prenylated mating factor. This is Pheromone receptor 1 (PRA1) from Ustilago hordei (Barley covered smut fungus).